The primary structure comprises 626 residues: DNA mismatch repair protein MutL (626 aa).

2 disordered regions span residues 385-413 (SGAS…PSMV) and 418-437 (LTPS…VAPD).

It belongs to the DNA mismatch repair MutL/HexB family.

This protein is involved in the repair of mismatches in DNA. It is required for dam-dependent methyl-directed DNA mismatch repair. May act as a 'molecular matchmaker', a protein that promotes the formation of a stable complex between two or more DNA-binding proteins in an ATP-dependent manner without itself being part of a final effector complex. In Chlorobaculum parvum (strain DSM 263 / NCIMB 8327) (Chlorobium vibrioforme subsp. thiosulfatophilum), this protein is DNA mismatch repair protein MutL.